The following is a 308-amino-acid chain: Type II restriction enzyme MamI (308 aa).

It carries out the reaction Endonucleolytic cleavage of DNA to give specific double-stranded fragments with terminal 5'-phosphates.. Functionally, a P subtype restriction enzyme that recognizes the double-stranded sequence 5'-GATNNNNATC-3' and cleaves after N-5. The chain is Type II restriction enzyme MamI from Microbacterium ammoniaphilum.